The following is a 511-amino-acid chain: 2-isopropylmalate synthase (511 aa).

A Pyruvate carboxyltransferase domain is found at 6–269 (IIIFDTTLRD…YTDIKCENIF (264 aa)). Residues D15, H203, H205, and N239 each coordinate Mn(2+). The segment at 394–511 (VIEKLSVISG…SLKVEERKMA (118 aa)) is regulatory domain.

It belongs to the alpha-IPM synthase/homocitrate synthase family. LeuA type 1 subfamily. Homodimer. It depends on Mn(2+) as a cofactor.

It is found in the cytoplasm. It carries out the reaction 3-methyl-2-oxobutanoate + acetyl-CoA + H2O = (2S)-2-isopropylmalate + CoA + H(+). It participates in amino-acid biosynthesis; L-leucine biosynthesis; L-leucine from 3-methyl-2-oxobutanoate: step 1/4. Functionally, catalyzes the condensation of the acetyl group of acetyl-CoA with 3-methyl-2-oxobutanoate (2-ketoisovalerate) to form 3-carboxy-3-hydroxy-4-methylpentanoate (2-isopropylmalate). In Campylobacter jejuni (strain RM1221), this protein is 2-isopropylmalate synthase.